A 361-amino-acid polypeptide reads, in one-letter code: Protein RecA (361 aa).

68–75 (GPESSGKT) contributes to the ATP binding site. The tract at residues 342-361 (PEGAKENISAKDDVAVDTKE) is disordered. The span at 344–361 (GAKENISAKDDVAVDTKE) shows a compositional bias: basic and acidic residues.

Belongs to the RecA family.

It localises to the cytoplasm. Can catalyze the hydrolysis of ATP in the presence of single-stranded DNA, the ATP-dependent uptake of single-stranded DNA by duplex DNA, and the ATP-dependent hybridization of homologous single-stranded DNAs. It interacts with LexA causing its activation and leading to its autocatalytic cleavage. The polypeptide is Protein RecA (Clostridium beijerinckii (strain ATCC 51743 / NCIMB 8052) (Clostridium acetobutylicum)).